A 560-amino-acid chain; its full sequence is DNA ligase B (560 aa).

The N6-AMP-lysine intermediate role is filled by Lys-124.

This sequence belongs to the NAD-dependent DNA ligase family. LigB subfamily.

The enzyme catalyses NAD(+) + (deoxyribonucleotide)n-3'-hydroxyl + 5'-phospho-(deoxyribonucleotide)m = (deoxyribonucleotide)n+m + AMP + beta-nicotinamide D-nucleotide.. In terms of biological role, catalyzes the formation of phosphodiester linkages between 5'-phosphoryl and 3'-hydroxyl groups in double-stranded DNA using NAD as a coenzyme and as the energy source for the reaction. This chain is DNA ligase B, found in Shigella sonnei (strain Ss046).